The primary structure comprises 296 residues: Nucleotide-binding protein SGO_0954 (296 aa).

13–20 (GMSGAGKT) is a binding site for ATP. 63–66 (DMRS) contacts GTP.

This sequence belongs to the RapZ-like family.

Displays ATPase and GTPase activities. The sequence is that of Nucleotide-binding protein SGO_0954 from Streptococcus gordonii (strain Challis / ATCC 35105 / BCRC 15272 / CH1 / DL1 / V288).